The sequence spans 828 residues: Periplasmic nitrate reductase (828 aa).

Residues 1-31 constitute a signal peptide (tat-type signal); it reads MKLSRRSFMKANAVAAAAAAAGLSVPGVARA. A 4Fe-4S Mo/W bis-MGD-type domain is found at 39–95; that stretch reads IKWDKAPCRFCGTGCGVLVGTQQGRVVACQGDPDAPVNRGLNCIKGYFLPKIMYGKD. The [4Fe-4S] cluster site is built by cysteine 46, cysteine 49, cysteine 53, and cysteine 81. Residues lysine 83, glutamine 150, asparagine 175, cysteine 179, 212-219, 243-247, 262-264, methionine 372, glutamine 376, asparagine 482, 508-509, lysine 531, aspartate 558, and 718-727 contribute to the Mo-bis(molybdopterin guanine dinucleotide) site; these read WGANMAEM, STYQH, QSD, SD, and TGRVLEHWHT. Phenylalanine 794 is a substrate binding site. Mo-bis(molybdopterin guanine dinucleotide)-binding residues include asparagine 802 and lysine 819.

This sequence belongs to the prokaryotic molybdopterin-containing oxidoreductase family. NasA/NapA/NarB subfamily. In terms of assembly, component of the periplasmic nitrate reductase NapAB complex composed of NapA and NapB. [4Fe-4S] cluster is required as a cofactor. The cofactor is Mo-bis(molybdopterin guanine dinucleotide). Predicted to be exported by the Tat system. The position of the signal peptide cleavage has not been experimentally proven.

The protein localises to the periplasm. It carries out the reaction 2 Fe(II)-[cytochrome] + nitrate + 2 H(+) = 2 Fe(III)-[cytochrome] + nitrite + H2O. Functionally, catalytic subunit of the periplasmic nitrate reductase complex NapAB. Receives electrons from NapB and catalyzes the reduction of nitrate to nitrite. In Escherichia coli O7:K1 (strain IAI39 / ExPEC), this protein is Periplasmic nitrate reductase.